The sequence spans 225 residues: UPF0758 protein Sfri_3828 (225 aa).

The region spanning 102–224 is the MPN domain; the sequence is ILTNPDLTRD…IVSFAERGWI (123 aa). Zn(2+)-binding residues include His-173, His-175, and Asp-186. Positions 173–186 match the JAMM motif motif; sequence HNHPSGIAEPSQAD.

It belongs to the UPF0758 family.

This is UPF0758 protein Sfri_3828 from Shewanella frigidimarina (strain NCIMB 400).